Here is a 231-residue protein sequence, read N- to C-terminus: Large ribosomal subunit protein uL1 (231 aa).

It belongs to the universal ribosomal protein uL1 family. As to quaternary structure, part of the 50S ribosomal subunit.

Functionally, binds directly to 23S rRNA. The L1 stalk is quite mobile in the ribosome, and is involved in E site tRNA release. Its function is as follows. Protein L1 is also a translational repressor protein, it controls the translation of the L11 operon by binding to its mRNA. In Teredinibacter turnerae (strain ATCC 39867 / T7901), this protein is Large ribosomal subunit protein uL1.